The sequence spans 70 residues: Prokaryotic ubiquitin-like protein UBact (70 aa).

2 stretches are compositionally biased toward basic and acidic residues: residues 1-15 (MPDQ…RKQG) and 24-50 (TRHD…RDPG). Residues 1-70 (MPDQRQQERS…RQQRREQSGE (70 aa)) are disordered. Residue glutamate 70 forms an Isoglutamyl lysine isopeptide (Glu-Lys) (interchain with K-? in acceptor proteins) linkage.

This sequence belongs to the ubiquitin-like protein UBact family.

Its function is as follows. May function as a protein modifier covalently attached to lysine residues of substrate proteins. This may serve to target the modified proteins for degradation by proteasomes. This chain is Prokaryotic ubiquitin-like protein UBact, found in Terrybacteria sp. (strain RIFCSPHIGHO2_01_FULL_58_15).